Consider the following 182-residue polypeptide: Ribosome-recycling factor (182 aa).

A disordered region spans residues 137–158; the sequence is KKSEKESEISEDQSRDEQDNVQ.

This sequence belongs to the RRF family.

Its subcellular location is the cytoplasm. Its function is as follows. Responsible for the release of ribosomes from messenger RNA at the termination of protein biosynthesis. May increase the efficiency of translation by recycling ribosomes from one round of translation to another. This Prochlorococcus marinus (strain MIT 9211) protein is Ribosome-recycling factor.